The following is a 609-amino-acid chain: NURS complex subunit pir2 (609 aa).

Positions Met1 to Gln25 are enriched in basic and acidic residues. Disordered stretches follow at residues Met1–Gly60 and Glu187–Lys210. Residues Arg27–Ser36 show a composition bias toward low complexity. Ser28 and Ser30 each carry phosphoserine. Basic and acidic residues predominate over residues Ala37–Arg57. The span at Leu201 to Lys210 shows a compositional bias: polar residues. Residues Tyr474–His499 form a C2H2-type zinc finger.

This sequence belongs to the ARS2 family. Interacts with ccr4.

The protein localises to the nucleus. The chain is NURS complex subunit pir2 from Schizosaccharomyces pombe (strain 972 / ATCC 24843) (Fission yeast).